We begin with the raw amino-acid sequence, 869 residues long: Ubiquitin carboxyl-terminal hydrolase 29 (869 aa).

Composition is skewed to polar residues over residues 104–120 (SSTP…MSSQ) and 140–150 (SLNTTPESGTP). The disordered stretch occupies residues 104-226 (SSTPCESQQP…KAVTLREQEK (123 aa)). Positions 187–200 (VNKDIPKENTPDQK) are enriched in basic and acidic residues. Residues 201 to 212 (KKSRRYYSRNRG) show a composition bias toward basic residues. Positions 213–226 (GKAEKAVTLREQEK) are enriched in basic and acidic residues. The USP domain occupies 289 to 826 (EGFPNLGNTC…SGYIFFYMHN (538 aa)). Cysteine 298 serves as the catalytic Nucleophile. Positions 723–754 (SQEDPEKDLSRSPELQEDDPHSFAFGSDDSKD) are disordered. Catalysis depends on histidine 781, which acts as the Proton acceptor.

The protein belongs to the peptidase C19 family. As to expression, predominantly expressed in brain and testis. Highest expression levels in adult brain, especially in the cerebral cortex and hippocampus, and in the forebrain, face, and limb buds of midgestation mouse embryos.

It is found in the cytoplasm. The protein localises to the perinuclear region. It carries out the reaction Thiol-dependent hydrolysis of ester, thioester, amide, peptide and isopeptide bonds formed by the C-terminal Gly of ubiquitin (a 76-residue protein attached to proteins as an intracellular targeting signal).. Functionally, deubiquitinase involved in innate antiviral immunity by mediating 'Lys-48'-linked deubiquitination of CGAS, thereby promoting its stabilization. This is Ubiquitin carboxyl-terminal hydrolase 29 from Mus musculus (Mouse).